We begin with the raw amino-acid sequence, 120 residues long: NAD(P)H-quinone oxidoreductase subunit 3, organellar chromatophore (120 aa).

3 consecutive transmembrane segments (helical) span residues 6–26 (GYDAFLGFLLIATAVPVLALL), 64–84 (MFALVFVIFDVETVFLYPWAV), and 89–109 (LGLLAFIEALIFIAILVIALA).

This sequence belongs to the complex I subunit 3 family. In terms of assembly, NDH is composed of at least 16 different subunits, 5 of which are encoded in the nucleus.

The protein localises to the plastid. It localises to the organellar chromatophore thylakoid membrane. It catalyses the reaction a plastoquinone + NADH + (n+1) H(+)(in) = a plastoquinol + NAD(+) + n H(+)(out). The enzyme catalyses a plastoquinone + NADPH + (n+1) H(+)(in) = a plastoquinol + NADP(+) + n H(+)(out). NDH shuttles electrons from NAD(P)H:plastoquinone, via FMN and iron-sulfur (Fe-S) centers, to quinones in the photosynthetic chain and possibly in a chloroplast respiratory chain. The immediate electron acceptor for the enzyme in this species is believed to be plastoquinone. Couples the redox reaction to proton translocation, and thus conserves the redox energy in a proton gradient. The sequence is that of NAD(P)H-quinone oxidoreductase subunit 3, organellar chromatophore from Paulinella chromatophora.